A 539-amino-acid polypeptide reads, in one-letter code: F-box only protein 31 (539 aa).

The segment at 11 to 53 (GPSRGCRRRQQRRGPAETAAADSEPDTDPEEERIEASAGVGGG) is disordered. Ser33 is subject to Phosphoserine. Position 33 is a phosphoserine; by PKB/AKT1 (Ser33). Positions 33 to 43 (SEPDTDPEEER) are enriched in acidic residues. Thr37 bears the Phosphothreonine mark. The D box motif lies at 64 to 69 (RCSLLE). An F-box domain is found at 64 to 110 (RCSLLELPPELLVEIFASLPGTDLPSLAQVCTKFRRILHTDTIWRRR). 4 residues coordinate Zn(2+): Cys206, His214, Cys230, and His236. Ser278 is subject to Phosphoserine; by ATM. The short motif at 297 to 299 (DDL) is the DDL motif element. Over residues 377–397 (VRQEQQEGGHEAGEGRGRQGP) the composition is skewed to basic and acidic residues. Residues 377-446 (VRQEQQEGGH…PAQCGQGQPF (70 aa)) form a disordered region. Position 419 is a phosphothreonine; by MTOR (Thr419). Residue Ser480 is modified to Phosphoserine.

This sequence belongs to the FBXO31 family. In terms of assembly, part of a SCF (SKP1-cullin-F-box) protein ligase complex SCF(FBXO31) composed of CUL1, SKP1, RBX1 and FBXO31. Interacts (when phosphorylated at Ser-33) with CDC20, promoting ubiquitination by the APC/C complex. Post-translationally, phosphorylation at Ser-278 by ATM following gamma-irradiation results in its stabilization. Phosphorylation at Thr-419 and Ser-480 in absence of stress promotes its ubiquitination and degradation by the SCF(FBXO46) complex. Phosphorylation at Ser-33 by AKT1 promotes association with CDC20 and ubiquitination by the APC/C complex. In terms of processing, ubiquitinated by the SCF(FBXO46) complex in absence of stress, promoting its degradation. Ubiquitinated by the APC/C complex following phosphorylation at Ser-33, leading to its degradation by the proteasome. As to expression, highly expressed in brain. Expressed at moderate levels in most tissues, except bone marrow.

It is found in the cytoplasm. Its subcellular location is the cytoskeleton. It localises to the microtubule organizing center. The protein resides in the centrosome. It functions in the pathway protein modification; protein ubiquitination. Substrate-recognition component of the SCF(FBXO31) protein ligase complex, which specifically mediates the ubiquitination of proteins amidated at their C-terminus in response to oxidative stress, leading to their degradation by the proteasome. FBXO31 specifically recognizes and binds C-terminal peptides bearing an amide: C-terminal amidation in response to oxidative stress takes place following protein fragmentation. The SCF(FBXO31) also plays a role in G1 arrest following DNA damage by mediating ubiquitination of phosphorylated cyclin-D1 (CCND1), promoting its degradation by the proteasome, resulting in G1 arrest. The SCF(FBXO31) complex is however not a major regulator of CCND1 stability during the G1/S transition. In response to genotoxic stress, the SCF(FBXO31) complex directs ubiquitination and degradation of phosphorylated MDM2, thereby promoting p53/TP53-mediated DNA damage response. SCF(FBXO31) complex is required for genomic integrity by catalyzing ubiquitination and degradation of cyclin-A (CCNA1 and/or CCNA2) during the G1 phase. In response to genotoxic stress, the SCF(FBXO31) complex directs ubiquitination and degradation of phosphorylated FBXO46 and MAP2K6. SCF(FBXO31) complex promotes ubiquitination and degradation of CDT1 during the G2 phase to prevent re-replication. The SCF(FBXO31) complex also mediates ubiquitination and degradation of DUSP6, OGT and PARD6A. The sequence is that of F-box only protein 31 from Homo sapiens (Human).